Consider the following 300-residue polypeptide: Ribosomal protein L11 methyltransferase (300 aa).

4 residues coordinate S-adenosyl-L-methionine: Thr152, Gly173, Asp195, and Asn234.

The protein belongs to the methyltransferase superfamily. PrmA family.

It is found in the cytoplasm. It catalyses the reaction L-lysyl-[protein] + 3 S-adenosyl-L-methionine = N(6),N(6),N(6)-trimethyl-L-lysyl-[protein] + 3 S-adenosyl-L-homocysteine + 3 H(+). Its function is as follows. Methylates ribosomal protein L11. This chain is Ribosomal protein L11 methyltransferase, found in Burkholderia pseudomallei (strain 1710b).